The following is a 197-amino-acid chain: Recombination protein RecR (197 aa).

The segment at 56-71 adopts a C4-type zinc-finger fold; that stretch reads CHVCGNYCESDTCNIC. Residues 79–174 form the Toprim domain; that stretch reads RIICVVEESK…KITKLASGIP (96 aa).

It belongs to the RecR family.

Functionally, may play a role in DNA repair. It seems to be involved in an RecBC-independent recombinational process of DNA repair. It may act with RecF and RecO. In Fusobacterium nucleatum subsp. nucleatum (strain ATCC 25586 / DSM 15643 / BCRC 10681 / CIP 101130 / JCM 8532 / KCTC 2640 / LMG 13131 / VPI 4355), this protein is Recombination protein RecR.